Here is an 81-residue protein sequence, read N- to C-terminus: Small ribosomal subunit protein bS18A (81 aa).

The protein belongs to the bacterial ribosomal protein bS18 family. Part of the 30S ribosomal subunit. Forms a tight heterodimer with protein bS6.

Its function is as follows. Binds as a heterodimer with protein bS6 to the central domain of the 16S rRNA, where it helps stabilize the platform of the 30S subunit. The protein is Small ribosomal subunit protein bS18A of Saccharopolyspora erythraea (strain ATCC 11635 / DSM 40517 / JCM 4748 / NBRC 13426 / NCIMB 8594 / NRRL 2338).